Reading from the N-terminus, the 465-residue chain is Probable citrate synthase, mitochondrial (465 aa).

Active-site residues include His-303, His-349, and Asp-404.

This sequence belongs to the citrate synthase family. Homodimer.

It localises to the mitochondrion matrix. The enzyme catalyses oxaloacetate + acetyl-CoA + H2O = citrate + CoA + H(+). Its pathway is carbohydrate metabolism; tricarboxylic acid cycle; isocitrate from oxaloacetate: step 1/2. The sequence is that of Probable citrate synthase, mitochondrial from Glossina morsitans morsitans (Savannah tsetse fly).